A 229-amino-acid polypeptide reads, in one-letter code: Adenosylcobinamide-GDP ribazoletransferase (229 aa).

A run of 6 helical transmembrane segments spans residues 31–51 (AMLL…AVLA), 55–75 (AVEL…AASS), 111–131 (AGVL…ATLL), 134–154 (PLLA…VCCT), 176–196 (VAVL…LVLV), and 208–228 (GDVM…AWAA).

It belongs to the CobS family. The cofactor is Mg(2+).

It is found in the cell membrane. The enzyme catalyses alpha-ribazole + adenosylcob(III)inamide-GDP = adenosylcob(III)alamin + GMP + H(+). It catalyses the reaction alpha-ribazole 5'-phosphate + adenosylcob(III)inamide-GDP = adenosylcob(III)alamin 5'-phosphate + GMP + H(+). The protein operates within cofactor biosynthesis; adenosylcobalamin biosynthesis; adenosylcobalamin from cob(II)yrinate a,c-diamide: step 7/7. Functionally, joins adenosylcobinamide-GDP and alpha-ribazole to generate adenosylcobalamin (Ado-cobalamin). Also synthesizes adenosylcobalamin 5'-phosphate from adenosylcobinamide-GDP and alpha-ribazole 5'-phosphate. This chain is Adenosylcobinamide-GDP ribazoletransferase, found in Nocardioides sp. (strain ATCC BAA-499 / JS614).